Consider the following 132-residue polypeptide: DNA-binding protein inhibitor ID-2 (132 aa).

One can recognise a bHLH domain in the interval 23–75 (ARSKTPVDDPMSLLYNMNDCYSKLKELVPSIPQNKKVSKMEILQHVIDYILDL). A Nuclear export signal motif is present at residues 105 to 114 (LNTDISILSL).

As to quaternary structure, heterodimer with other HLH proteins.

It is found in the cytoplasm. The protein localises to the nucleus. Its function is as follows. Transcriptional regulator (lacking a basic DNA binding domain) which negatively regulates the basic helix-loop-helix (bHLH) transcription factors by forming heterodimers and inhibiting their DNA binding and transcriptional activity. Inhibits the activity of both neurogenic (neurod1/neuroD) and myogenic (myod1/myoD) bHLH factors. May play a role in the regulation of the circadian clock. This is DNA-binding protein inhibitor ID-2 from Xenopus tropicalis (Western clawed frog).